The sequence spans 175 residues: Protein GrpE (175 aa).

The protein belongs to the GrpE family. In terms of assembly, homodimer.

It is found in the cytoplasm. Participates actively in the response to hyperosmotic and heat shock by preventing the aggregation of stress-denatured proteins, in association with DnaK and GrpE. It is the nucleotide exchange factor for DnaK and may function as a thermosensor. Unfolded proteins bind initially to DnaJ; upon interaction with the DnaJ-bound protein, DnaK hydrolyzes its bound ATP, resulting in the formation of a stable complex. GrpE releases ADP from DnaK; ATP binding to DnaK triggers the release of the substrate protein, thus completing the reaction cycle. Several rounds of ATP-dependent interactions between DnaJ, DnaK and GrpE are required for fully efficient folding. The sequence is that of Protein GrpE from Thermoplasma acidophilum (strain ATCC 25905 / DSM 1728 / JCM 9062 / NBRC 15155 / AMRC-C165).